Consider the following 614-residue polypeptide: Chaperone protein DnaK (614 aa).

At Thr-174 the chain carries Phosphothreonine; by autocatalysis. Positions 576 to 614 (QTGGAAPGPDMGADPGAGGAQGDDNVVDAEYTEVDKDQK) are disordered. Residues 578-589 (GGAAPGPDMGAD) are compositionally biased toward low complexity.

It belongs to the heat shock protein 70 family.

In terms of biological role, acts as a chaperone. The polypeptide is Chaperone protein DnaK (Desulfitobacterium hafniense (strain DSM 10664 / DCB-2)).